The primary structure comprises 299 residues: Streptogrisin-B (299 aa).

A signal peptide spans 1–38 (MRIKRTSNRSNAARRVRTTAVLAGLAAVAALAVPTANA). Positions 39–114 (ETPRTFSANQ…ERTPGKFTKL (76 aa)) are excised as a propeptide. A disulfide bridge connects residues cysteine 128 and cysteine 148. Residues histidine 147, aspartate 177, and serine 255 each act as charge relay system in the active site. Cysteine 249 and cysteine 276 are joined by a disulfide.

This sequence belongs to the peptidase S1 family. In terms of assembly, monomer.

It carries out the reaction Hydrolysis of proteins with trypsin-like specificity.. Its function is as follows. Has a primary specificity for large aliphatic or aromatic amino acids. The sequence is that of Streptogrisin-B (sprB) from Streptomyces griseus.